The following is a 353-amino-acid chain: Rhodopsin (353 aa).

The Extracellular segment spans residues 1 to 36; it reads MNGTEGPYFYIPMVNTTGIVRSPYEYPQYYLVNPAA. N-linked (GlcNAc...) asparagine glycans are attached at residues asparagine 2 and asparagine 15. The helical transmembrane segment at 37–61 threads the bilayer; the sequence is YAALGAYMFLLILIGFPVNFLTLYV. Residues 62 to 73 lie on the Cytoplasmic side of the membrane; sequence TIEHKKLRTPLN. The helical transmembrane segment at 74 to 96 threads the bilayer; that stretch reads YILLNLAVADLFMVFGGFTTTMY. Topologically, residues 97 to 110 are extracellular; the sequence is TSMHGYFVLGRLGC. Cysteine 110 and cysteine 187 are joined by a disulfide. A helical transmembrane segment spans residues 111–133; it reads NLEGFFATLGGEIALWSLVVLAV. Positions 134 to 136 match the 'Ionic lock' involved in activated form stabilization motif; the sequence is ERW. Topologically, residues 134–152 are cytoplasmic; the sequence is ERWMVVCKPISNFRFGEDH. Residues 153–173 form a helical membrane-spanning segment; it reads AIMGLAFTWVMAAACAVPPLV. Residues 174–202 lie on the Extracellular side of the membrane; it reads GWSRYIPEGMQCSCGIDYYTRAEGFNNES. The N-linked (GlcNAc...) asparagine glycan is linked to asparagine 200. Residues 203-224 form a helical membrane-spanning segment; that stretch reads FVIYMFVCHFLIPLVVVFFCYG. The Cytoplasmic portion of the chain corresponds to 225–252; it reads RLLCAVKEAAAAQQESETTQRAEREVSR. Residues 253–274 traverse the membrane as a helical segment; it reads MVVIMVVAFLVCWCPYAGVAWY. Over 275-286 the chain is Extracellular; the sequence is IFTHQGSEFGPL. The chain crosses the membrane as a helical span at residues 287-308; that stretch reads FMTFPAFFAKSSSIYNPMIYIC. Position 296 is an N6-(retinylidene)lysine (lysine 296). The Cytoplasmic portion of the chain corresponds to 309–353; sequence MNKQFRQCMITTLCCGKNPFEEEEGASTTSKTEASSVSSSSVSPA. S-palmitoyl cysteine attachment occurs at residues cysteine 322 and cysteine 323. The interval 329–353 is disordered; the sequence is EEEEGASTTSKTEASSVSSSSVSPA. Positions 334 to 353 are enriched in low complexity; the sequence is ASTTSKTEASSVSSSSVSPA.

It belongs to the G-protein coupled receptor 1 family. Opsin subfamily. Phosphorylated on some or all of the serine and threonine residues present in the C-terminal region. In terms of processing, contains one covalently linked retinal chromophore.

The protein localises to the membrane. It is found in the cell projection. It localises to the cilium. The protein resides in the photoreceptor outer segment. Photoreceptor required for image-forming vision at low light intensity. While most salt water fish species use retinal as chromophore, most freshwater fish use 3-dehydroretinal, or a mixture of retinal and 3-dehydroretinal. Light-induced isomerization of 11-cis to all-trans retinal triggers a conformational change that activates signaling via G-proteins. Subsequent receptor phosphorylation mediates displacement of the bound G-protein alpha subunit by arrestin and terminates signaling. This Chelon auratus (Golden grey mullet) protein is Rhodopsin (rho).